The following is a 379-amino-acid chain: MSATLALTEQLIARASVTPDDQHCQQLMIERLAALGFECETIASHGVTNFWAVKRGTAGRAGKLLAFAGHTDVVPTGPLEQWRSPPFVPTHRDGKLYGRGAADMKTSLAGFVVAAEEFVAAHPQHRGSIGFLITSDEEGPATDGTVKVVEALAARGERLDYCIVGEPTSTATLGDVVKNGRRGSMSGELVVKGVQGHIAYPHLAKNPIHLLAPALAELAAEQWDEGNEYFPPTTWQVSNLRAGTGATNVIPGHADLLFNFRFSTASTVEGLQARVHAILDRHGLDYTLNWSVSGLPFLTPRGELSNALDAAIRAETGVSPELSTTGGTSDGRFIARICPQVIEFGPPNASIHKIDEHIDVRFVDPLKNVYRRVLEQLIA.

H70 lines the Zn(2+) pocket. D72 is an active-site residue. D103 contacts Zn(2+). Residue E137 is the Proton acceptor of the active site. Zn(2+) contacts are provided by E138, E166, and H352.

This sequence belongs to the peptidase M20A family. DapE subfamily. As to quaternary structure, homodimer. Zn(2+) is required as a cofactor. It depends on Co(2+) as a cofactor.

It catalyses the reaction N-succinyl-(2S,6S)-2,6-diaminopimelate + H2O = (2S,6S)-2,6-diaminopimelate + succinate. It participates in amino-acid biosynthesis; L-lysine biosynthesis via DAP pathway; LL-2,6-diaminopimelate from (S)-tetrahydrodipicolinate (succinylase route): step 3/3. In terms of biological role, catalyzes the hydrolysis of N-succinyl-L,L-diaminopimelic acid (SDAP), forming succinate and LL-2,6-diaminopimelate (DAP), an intermediate involved in the bacterial biosynthesis of lysine and meso-diaminopimelic acid, an essential component of bacterial cell walls. The sequence is that of Succinyl-diaminopimelate desuccinylase from Burkholderia mallei (strain NCTC 10247).